Reading from the N-terminus, the 127-residue chain is V-type proton ATPase subunit F (127 aa).

This sequence belongs to the V-ATPase F subunit family. In terms of assembly, V-ATPase is a heteromultimeric enzyme made up of two complexes: the ATP-hydrolytic V1 complex and the proton translocation V0 complex. The V1 complex consists of three catalytic AB heterodimers that form a heterohexamer, three peripheral stalks each consisting of EG heterodimers, one central rotor including subunits D and F, and the regulatory subunits C and H. The proton translocation complex V0 consists of the proton transport subunit a, a ring of proteolipid subunits c9c'', rotary subunit d, subunits e and f, and the accessory subunits VhaAC45 and ATP6AP2.

Its function is as follows. Subunit of the V1 complex of vacuolar(H+)-ATPase (V-ATPase), a multisubunit enzyme composed of a peripheral complex (V1) that hydrolyzes ATP and a membrane integral complex (V0) that translocates protons. V-ATPase is responsible for acidifying and maintaining the pH of intracellular compartments and in some cell types, is targeted to the plasma membrane, where it is responsible for acidifying the extracellular environment. The polypeptide is V-type proton ATPase subunit F (Vha14) (Anopheles gambiae (African malaria mosquito)).